The sequence spans 167 residues: Early nodulin-like protein 16 (167 aa).

The first 24 residues, 1 to 24, serve as a signal peptide directing secretion; that stretch reads MARVAVLVAGAVLAFLLAATNVTA. One can recognise a Phytocyanin domain in the interval 25–126; sequence KRWTVGDNKF…GMKLAVLVEK (102 aa). N-linked (GlcNAc...) asparagine glycans are attached at residues Asn40, Asn71, Asn86, and Asn99. A disulfide bridge links Cys78 with Cys114. The GPI-anchor amidated asparagine moiety is linked to residue Asn138. A propeptide spans 139–167 (removed in mature form); the sequence is SARRTFSVSGFAYQFLIPVAVFAAVGTRY.

The protein belongs to the early nodulin-like (ENODL) family.

The protein resides in the cell membrane. Functionally, may act as a carbohydrate transporter. The protein is Early nodulin-like protein 16 of Arabidopsis thaliana (Mouse-ear cress).